Reading from the N-terminus, the 426-residue chain is Phosphomethylpyrimidine synthase (426 aa).

Residues Asn65, Met94, Tyr123, His162, 184-186 (SRG), 225-228 (DGMR), and Glu264 each bind substrate. Zn(2+) is bound at residue His268. Residue Tyr291 coordinates substrate. Position 332 (His332) interacts with Zn(2+). Residues Cys408, Cys411, and Cys415 each contribute to the [4Fe-4S] cluster site.

Belongs to the ThiC family. Requires [4Fe-4S] cluster as cofactor.

The catalysed reaction is 5-amino-1-(5-phospho-beta-D-ribosyl)imidazole + S-adenosyl-L-methionine = 4-amino-2-methyl-5-(phosphooxymethyl)pyrimidine + CO + 5'-deoxyadenosine + formate + L-methionine + 3 H(+). The protein operates within cofactor biosynthesis; thiamine diphosphate biosynthesis. Catalyzes the synthesis of the hydroxymethylpyrimidine phosphate (HMP-P) moiety of thiamine from aminoimidazole ribotide (AIR) in a radical S-adenosyl-L-methionine (SAM)-dependent reaction. The sequence is that of Phosphomethylpyrimidine synthase from Methanococcus aeolicus (strain ATCC BAA-1280 / DSM 17508 / OCM 812 / Nankai-3).